Reading from the N-terminus, the 382-residue chain is Anhydro-N-acetylmuramic acid kinase (382 aa).

An ATP-binding site is contributed by 18–25 (GTSLDGVD).

The protein belongs to the anhydro-N-acetylmuramic acid kinase family.

The enzyme catalyses 1,6-anhydro-N-acetyl-beta-muramate + ATP + H2O = N-acetyl-D-muramate 6-phosphate + ADP + H(+). It functions in the pathway amino-sugar metabolism; 1,6-anhydro-N-acetylmuramate degradation. The protein operates within cell wall biogenesis; peptidoglycan recycling. Its function is as follows. Catalyzes the specific phosphorylation of 1,6-anhydro-N-acetylmuramic acid (anhMurNAc) with the simultaneous cleavage of the 1,6-anhydro ring, generating MurNAc-6-P. Is required for the utilization of anhMurNAc either imported from the medium or derived from its own cell wall murein, and thus plays a role in cell wall recycling. In Ralstonia nicotianae (strain ATCC BAA-1114 / GMI1000) (Ralstonia solanacearum), this protein is Anhydro-N-acetylmuramic acid kinase.